The primary structure comprises 719 residues: Protein ENHANCED DISEASE RESISTANCE 2-like (719 aa).

A PH domain is found at lysine 3–aspartate 110. The disordered stretch occupies residues alanine 134–serine 173. One can recognise an START domain in the interval glutamate 180 to glutamine 392. The segment at alanine 414–proline 478 is disordered. The span at serine 426–serine 439 shows a compositional bias: polar residues. The segment covering methionine 442 to proline 461 has biased composition (acidic residues). Basic and acidic residues predominate over residues glutamate 462–glutamate 477. A helical membrane pass occupies residues glycine 665–valine 685.

The protein resides in the endoplasmic reticulum membrane. Its subcellular location is the cell membrane. It localises to the endosome membrane. Binds to phosphatidylinositol-4-phosphate (PtdIns(4)P). May regulate the salicylic acid- (SA-) mediated resistance to pathogens. The chain is Protein ENHANCED DISEASE RESISTANCE 2-like (EDR2L) from Arabidopsis thaliana (Mouse-ear cress).